The following is a 526-amino-acid chain: Nucleobase-ascorbate transporter 4 (526 aa).

The next 12 membrane-spanning stretches (helical) occupy residues 42–62 (IVML…MGGG), 69–89 (VINT…LFGS), 91–111 (LPVV…ITFS), 131–151 (IQGA…FGLW), 157–177 (FLSP…LLAF), 186–206 (IEIG…LPHL), 217–237 (FAVL…TAAG), 282–302 (AFAM…SFIA), 359–381 (RVVQ…GAVL), 388–410 (IFAA…LLQF), 420–440 (FILG…TEYL), and 457–477 (VIMQ…AFLL).

The protein belongs to the nucleobase:cation symporter-2 (NCS2) (TC 2.A.40) family. In terms of tissue distribution, highly expressed in the root central cylinder. Expressed in the filaments and stigmatic papillae of pollinated flowers and developing siliques.

The protein resides in the membrane. This is Nucleobase-ascorbate transporter 4 (NAT4) from Arabidopsis thaliana (Mouse-ear cress).